Here is a 44-residue protein sequence, read N- to C-terminus: MGCKACGTNCQCSATKCGDNCACSQQCQCSCKNGPKDKCCSTKN.

This sequence belongs to the metallothionein superfamily. Type 5 family.

In terms of biological role, this protein binds cations of several transition elements. Thought to be involved in metal ion homeostasis. The protein is Metallothionein-4 (MtnD) of Drosophila melanogaster (Fruit fly).